Here is a 267-residue protein sequence, read N- to C-terminus: Putative transcription factor Ovo-like 1 (267 aa).

4 C2H2-type zinc fingers span residues 118–140, 146–168, 174–197, and 213–235; these read FTCH…MKCH, HLCT…VRTH, YKCS…KKIH, and YVCE…LKEH.

The protein localises to the nucleus. Functionally, putative transcription factor. Involved in hair formation and spermatogenesis. May function in the differentiation and/or maintenance of the urogenital system. The sequence is that of Putative transcription factor Ovo-like 1 (OVOL1) from Bos taurus (Bovine).